We begin with the raw amino-acid sequence, 599 residues long: Zinc metalloproteinase dpy-31 (599 aa).

Positions 1 to 22 (MALLKPFLSRTFSSFFATITGG) are cleaved as a signal peptide. Positions 23–211 (RNLIDSIEEL…IQHGRRTKRK (189 aa)) are excised as a propeptide. The 200-residue stretch at 211–410 (KFIRSELRRW…IRLMNVIYCS (200 aa)) folds into the Peptidase M12A domain. N251 carries an N-linked (GlcNAc...) asparagine glycan. 5 disulfides stabilise this stretch: C254–C409, C277–C298, C413–C433, C435–C444, and C455–C483. H306 is a binding site for Zn(2+). E307 is an active-site residue. H310 and H316 together coordinate Zn(2+). The 41-residue stretch at 405-445 (NVIYCSDSCAQKLPCQRGGYTDPRRCGRCRCPDGFTGKLCE) folds into the EGF-like domain. The CUB domain maps to 455–571 (CGGRIELTSS…KGFQAQVRAL (117 aa)). N-linked (GlcNAc...) asparagine glycosylation is present at N522.

It depends on Zn(2+) as a cofactor.

Its subcellular location is the secreted. Inhibited by marimastat and tripeptide hydroxamic acids. In terms of biological role, metalloprotease which cleaves the carboxyl terminus of procollagens to mature collagens. Probably involved in cuticular collagen maturation. In Brugia malayi (Filarial nematode worm), this protein is Zinc metalloproteinase dpy-31.